We begin with the raw amino-acid sequence, 149 residues long: SsrA-binding protein (149 aa).

This sequence belongs to the SmpB family.

The protein localises to the cytoplasm. Functionally, required for rescue of stalled ribosomes mediated by trans-translation. Binds to transfer-messenger RNA (tmRNA), required for stable association of tmRNA with ribosomes. tmRNA and SmpB together mimic tRNA shape, replacing the anticodon stem-loop with SmpB. tmRNA is encoded by the ssrA gene; the 2 termini fold to resemble tRNA(Ala) and it encodes a 'tag peptide', a short internal open reading frame. During trans-translation Ala-aminoacylated tmRNA acts like a tRNA, entering the A-site of stalled ribosomes, displacing the stalled mRNA. The ribosome then switches to translate the ORF on the tmRNA; the nascent peptide is terminated with the 'tag peptide' encoded by the tmRNA and targeted for degradation. The ribosome is freed to recommence translation, which seems to be the essential function of trans-translation. The protein is SsrA-binding protein of Acholeplasma laidlawii (strain PG-8A).